The sequence spans 455 residues: Ammonium transporter Rh type B (455 aa).

Over 1-13 (MAWSPRHSAGRRL) the chain is Cytoplasmic. A helical transmembrane segment spans residues 14 to 34 (QLPLLCLLLQGATAILFAVFV). Topologically, residues 35–61 (RYNRETDAALWHWGNHSNADNEFYFRY) are extracellular. N-linked (GlcNAc...) asparagine glycosylation is present at Asn-49. A helical membrane pass occupies residues 62 to 82 (PSFQDVHAMIFVGFGFLMVFL). The Cytoplasmic segment spans residues 83–86 (QRYG). A helical membrane pass occupies residues 87–107 (FGSVGFTFLLAAFALQWSTLI). Residues 108 to 124 (QGFFHSFRGGYILVGME) are Extracellular-facing. The helical transmembrane segment at 125-145 (SMINADFCAGAVLISFGAVLG) threads the bilayer. Residues 146–151 (KTGPVQ) are Cytoplasmic-facing. Residues 152–172 (LLLMALLEVVLFGLNEFVLLS) form a helical membrane-spanning segment. The Extracellular segment spans residues 173–179 (LLEVKDA). The chain crosses the membrane as a helical span at residues 180 to 200 (GGSMTIHTFGAYFGLILSRVL). Residues 201–219 (YRPQLEKSKHRQGSVYHSD) lie on the Cytoplasmic side of the membrane. Residues 220–240 (LFAMIGTIFLWIFWPSFNSAP) form a helical membrane-spanning segment. Residues 241 to 253 (TALGDGQHRTALN) lie on the Extracellular side of the membrane. Residues 254–274 (TYYSLTASTLSTFALSALVGG) traverse the membrane as a helical segment. The Cytoplasmic segment spans residues 275 to 277 (DGR). Residues 278–298 (LDMVHVQNAALAGGVVVGTSA) form a helical membrane-spanning segment. A topological domain (extracellular) is located at residue Glu-299. A helical membrane pass occupies residues 300–320 (MMLTPFGALAAGFLAGAISTL). Topologically, residues 321 to 343 (GYKFVTPILESKLKVQDTCGVHN) are cytoplasmic. Residues 344–364 (LHGMPGVLGALLGGLVAGLAT) traverse the membrane as a helical segment. Topologically, residues 365 to 393 (REAYGDGLESVFPLIAEGQRSATSQAMHQ) are extracellular. The helical transmembrane segment at 394–414 (LFGLFVTLTFASVGGGLGGLL) threads the bilayer. The Cytoplasmic segment spans residues 415–455 (LRLPILDSPPDSQCYEDQIYWEVPGEHEHLAQGSEETETQA). The interval 416 to 424 (RLPILDSPP) is interaction with ANK3. Positions 429–432 (YEDQ) match the Basolateral sorting signal motif.

This sequence belongs to the ammonium transporter (TC 2.A.49) family. Rh subfamily. In terms of assembly, interacts (via C-terminus) with ANK2 and ANK3; required for targeting to the basolateral membrane. In terms of processing, N-glycosylated.

It is found in the cell membrane. It localises to the basolateral cell membrane. The enzyme catalyses NH4(+)(in) = NH4(+)(out). It catalyses the reaction methylamine(out) = methylamine(in). The catalysed reaction is CO2(out) = CO2(in). Functionally, ammonium transporter involved in the maintenance of acid-base homeostasis. Transports ammonium and its related derivative methylammonium across the basolateral plasma membrane of epithelial cells likely contributing to renal transepithelial ammonia transport and ammonia metabolism. May transport either NH4(+) or NH3 ammonia species predominantly mediating an electrogenic NH4(+) transport. May act as a CO2 channel providing for renal acid secretion. The polypeptide is Ammonium transporter Rh type B (RHBG) (Bos taurus (Bovine)).